A 201-amino-acid polypeptide reads, in one-letter code: ATP-dependent Clp protease proteolytic subunit (201 aa).

Catalysis depends on Ser100, which acts as the Nucleophile. Residue His125 is part of the active site.

It belongs to the peptidase S14 family. In terms of assembly, component of the chloroplastic Clp protease core complex.

The protein localises to the plastid. It is found in the chloroplast stroma. The catalysed reaction is Hydrolysis of proteins to small peptides in the presence of ATP and magnesium. alpha-casein is the usual test substrate. In the absence of ATP, only oligopeptides shorter than five residues are hydrolyzed (such as succinyl-Leu-Tyr-|-NHMec, and Leu-Tyr-Leu-|-Tyr-Trp, in which cleavage of the -Tyr-|-Leu- and -Tyr-|-Trp bonds also occurs).. In terms of biological role, cleaves peptides in various proteins in a process that requires ATP hydrolysis. Has a chymotrypsin-like activity. Plays a major role in the degradation of misfolded proteins. The protein is ATP-dependent Clp protease proteolytic subunit of Chloranthus spicatus (Chulantree).